The following is a 340-amino-acid chain: Alpha-1,4-N-acetylglucosaminyltransferase (340 aa).

At 1–4 the chain is on the cytoplasmic side; that stretch reads MRKE. A helical; Signal-anchor for type II membrane protein transmembrane segment spans residues 5-25; sequence LQLSLSVTLLLVCGFLYQFTL. The Lumenal segment spans residues 26-340; the sequence is KSSCLFCLPS…VTGELGPGNK (315 aa). N-linked (GlcNAc...) asparagine glycans are attached at residues Asn-99 and Asn-138. The DXD motif motif lies at 167-169; that stretch reads DTD. 2 N-linked (GlcNAc...) asparagine glycosylation sites follow: Asn-251 and Asn-282.

Belongs to the glycosyltransferase 32 family. Detected in stomach and pancreas.

It localises to the golgi apparatus membrane. The protein operates within protein modification; protein glycosylation. Functionally, catalyzes the transfer of N-acetylglucosamine (GlcNAc) to core 2 branched O-glycans. Necessary for the synthesis of type III mucin which is specifically produced in the stomach, duodenum, and pancreatic duct. May protect against inflammation-associated gastric adenocarcinomas. In Homo sapiens (Human), this protein is Alpha-1,4-N-acetylglucosaminyltransferase (A4GNT).